Reading from the N-terminus, the 224-residue chain is Cytidylate kinase (224 aa).

10-18 (GPSGVGKGT) provides a ligand contact to ATP.

This sequence belongs to the cytidylate kinase family. Type 1 subfamily.

It is found in the cytoplasm. It catalyses the reaction CMP + ATP = CDP + ADP. The catalysed reaction is dCMP + ATP = dCDP + ADP. In Haemophilus ducreyi (strain 35000HP / ATCC 700724), this protein is Cytidylate kinase.